Here is a 279-residue protein sequence, read N- to C-terminus: Small ribosomal subunit protein uS2 (279 aa).

The tract at residues 255 to 279 (LLAGATTAAPEAAAGEAAAAPEQSS) is disordered.

The protein belongs to the universal ribosomal protein uS2 family.

This is Small ribosomal subunit protein uS2 from Mycolicibacterium gilvum (strain PYR-GCK) (Mycobacterium gilvum (strain PYR-GCK)).